The chain runs to 633 residues: Phosphomethylpyrimidine synthase (633 aa).

Substrate is bound by residues Asn-245, Met-274, Tyr-303, His-339, Ser-359–Gly-361, Asp-400–Arg-403, and Glu-439. Residue His-443 participates in Zn(2+) binding. A substrate-binding site is contributed by Tyr-466. His-507 contacts Zn(2+). The [4Fe-4S] cluster site is built by Cys-587, Cys-590, and Cys-595.

Belongs to the ThiC family. In terms of assembly, homodimer. It depends on [4Fe-4S] cluster as a cofactor.

It carries out the reaction 5-amino-1-(5-phospho-beta-D-ribosyl)imidazole + S-adenosyl-L-methionine = 4-amino-2-methyl-5-(phosphooxymethyl)pyrimidine + CO + 5'-deoxyadenosine + formate + L-methionine + 3 H(+). It functions in the pathway cofactor biosynthesis; thiamine diphosphate biosynthesis. Catalyzes the synthesis of the hydroxymethylpyrimidine phosphate (HMP-P) moiety of thiamine from aminoimidazole ribotide (AIR) in a radical S-adenosyl-L-methionine (SAM)-dependent reaction. The chain is Phosphomethylpyrimidine synthase from Neisseria gonorrhoeae (strain ATCC 700825 / FA 1090).